A 315-amino-acid chain; its full sequence is Ribosomal protein L11 methyltransferase (315 aa).

4 residues coordinate S-adenosyl-L-methionine: threonine 162, glycine 183, aspartate 205, and asparagine 248.

Belongs to the methyltransferase superfamily. PrmA family.

It localises to the cytoplasm. It catalyses the reaction L-lysyl-[protein] + 3 S-adenosyl-L-methionine = N(6),N(6),N(6)-trimethyl-L-lysyl-[protein] + 3 S-adenosyl-L-homocysteine + 3 H(+). Its function is as follows. Methylates ribosomal protein L11. The chain is Ribosomal protein L11 methyltransferase from Oceanobacillus iheyensis (strain DSM 14371 / CIP 107618 / JCM 11309 / KCTC 3954 / HTE831).